Consider the following 164-residue polypeptide: Phosphopantetheine adenylyltransferase (164 aa).

Ser9 provides a ligand contact to substrate. Residues 9–10 (SF) and His17 each bind ATP. Substrate-binding residues include Lys41, Leu73, and Lys87. Residues 88 to 90 (GLR), Glu98, and 123 to 129 (YSYISSS) each bind ATP.

It belongs to the bacterial CoaD family. As to quaternary structure, homohexamer. It depends on Mg(2+) as a cofactor.

The protein resides in the cytoplasm. The catalysed reaction is (R)-4'-phosphopantetheine + ATP + H(+) = 3'-dephospho-CoA + diphosphate. It functions in the pathway cofactor biosynthesis; coenzyme A biosynthesis; CoA from (R)-pantothenate: step 4/5. Functionally, reversibly transfers an adenylyl group from ATP to 4'-phosphopantetheine, yielding dephospho-CoA (dPCoA) and pyrophosphate. The polypeptide is Phosphopantetheine adenylyltransferase (Clostridium perfringens (strain SM101 / Type A)).